The sequence spans 347 residues: Phosphoribosylformylglycinamidine cyclo-ligase (347 aa).

This sequence belongs to the AIR synthase family.

It localises to the cytoplasm. The catalysed reaction is 2-formamido-N(1)-(5-O-phospho-beta-D-ribosyl)acetamidine + ATP = 5-amino-1-(5-phospho-beta-D-ribosyl)imidazole + ADP + phosphate + H(+). The protein operates within purine metabolism; IMP biosynthesis via de novo pathway; 5-amino-1-(5-phospho-D-ribosyl)imidazole from N(2)-formyl-N(1)-(5-phospho-D-ribosyl)glycinamide: step 2/2. The chain is Phosphoribosylformylglycinamidine cyclo-ligase from Alkalilimnicola ehrlichii (strain ATCC BAA-1101 / DSM 17681 / MLHE-1).